We begin with the raw amino-acid sequence, 462 residues long: Protein phosphatase 1M (462 aa).

The span at 1–10 shows a compositional bias: basic residues; it reads MSAGWFRRRF. Residues 1–66 form a disordered region; the sequence is MSAGWFRRRF…PVRSPARGRT (66 aa). Residues 100–452 form the PPM-type phosphatase domain; sequence EFGIEEDQEW…DDVSVFVIPL (353 aa). Mn(2+) contacts are provided by D127 and G128.

Belongs to the PP2C family. Requires Mg(2+) as cofactor. Mn(2+) is required as a cofactor. Widely expressed with highest levels in testis and lower levels in lung, kidney and brain.

Its subcellular location is the nucleus. It carries out the reaction O-phospho-L-seryl-[protein] + H2O = L-seryl-[protein] + phosphate. The enzyme catalyses O-phospho-L-threonyl-[protein] + H2O = L-threonyl-[protein] + phosphate. In Mus musculus (Mouse), this protein is Protein phosphatase 1M.